The sequence spans 37 residues: MRVSASVKKICRNCKIIRRKGVVRVICTDQRHKQRQG.

The protein belongs to the bacterial ribosomal protein bL36 family.

The protein is Large ribosomal subunit protein bL36 of Acidovorax ebreus (strain TPSY) (Diaphorobacter sp. (strain TPSY)).